The primary structure comprises 343 residues: Aspartate-semialdehyde dehydrogenase (343 aa).

Residues 20 to 23 (SGAV) and 48 to 49 (RS) each bind NADP(+). R108 is a phosphate binding site. C137 serves as the catalytic Acyl-thioester intermediate. Position 164 (Q164) interacts with substrate. Position 167–168 (167–168 (SG)) interacts with NADP(+). Residue K221 coordinates phosphate. R243 serves as a coordination point for substrate. H250 (proton acceptor) is an active-site residue. Q323 contributes to the NADP(+) binding site.

Belongs to the aspartate-semialdehyde dehydrogenase family. In terms of assembly, homodimer.

It catalyses the reaction L-aspartate 4-semialdehyde + phosphate + NADP(+) = 4-phospho-L-aspartate + NADPH + H(+). It participates in amino-acid biosynthesis; L-lysine biosynthesis via DAP pathway; (S)-tetrahydrodipicolinate from L-aspartate: step 2/4. The protein operates within amino-acid biosynthesis; L-methionine biosynthesis via de novo pathway; L-homoserine from L-aspartate: step 2/3. It functions in the pathway amino-acid biosynthesis; L-threonine biosynthesis; L-threonine from L-aspartate: step 2/5. In terms of biological role, catalyzes the NADPH-dependent formation of L-aspartate-semialdehyde (L-ASA) by the reductive dephosphorylation of L-aspartyl-4-phosphate. This is Aspartate-semialdehyde dehydrogenase from Prochlorococcus marinus (strain SARG / CCMP1375 / SS120).